Here is a 30-residue protein sequence, read N- to C-terminus: Cycloviolacin-O7 (30 aa).

Residues 1 to 30 (SIPCGESCVWIPCTITALAGCKCKSKVCYN) constitute a cross-link (cyclopeptide (Ser-Asn)). Disulfide bonds link Cys-4/Cys-21, Cys-8/Cys-23, and Cys-13/Cys-28.

This is a cyclic peptide.

In terms of biological role, probably participates in a plant defense mechanism. The protein is Cycloviolacin-O7 of Viola odorata (Sweet violet).